Here is an 877-residue protein sequence, read N- to C-terminus: AP-5 complex subunit beta-1 (877 aa).

As to quaternary structure, probably part of the adaptor protein complex 5 (AP-5), a tetramer composed of AP5B1, AP5M1, AP5S1 and AP5Z1. Interacts with ZFYVE26 and SPG11.

As part of AP-5, a probable fifth adaptor protein complex, it may be involved in endosomal transport. This is AP-5 complex subunit beta-1 (AP5B1) from Bos taurus (Bovine).